The chain runs to 776 residues: MASLIYRQLLTNSYTVDLSDEIQEIGSTKSQNVTINPGPFAQTGYAPVNWGPGEINDSTTVEPLLDGPYQPMTFNPPVDYWMLLAPTTPGVIVEGTNNTDRWLATILIEPNVQSENRTYTIFGIQEQLTVSNTSQDQWKFIDVVKTTANGSIGQYGSLLSSPKLYAVMKHNEKLYTYEGQTPNARTGHYSTTNYDSVNMTAFCDFYIIPRSEESKCTEYINNGLPPIQNTRNVVPLSLTARDVIHYRAQANEDIVISKTSFWKEMQYNRDITIRFKFANTIIKSGGLGYKWSEISFKPANYQYTYTRDGEEVTAHTTCSVNGVNDFSFNGGSLPTDFVVSKFEVIKENSYVYIDYWDDSQAFRNVMYVRSLAANLNSVMCTGGSYNFSLPVGQWPVLTGGAVSLHSAGVTLSTQFTDFVSLNSLRFRFRLAVEEPHFKLTRTRLDRLYGLPAADPNNGKEYYEIAGRFSLISLVPSNDDYQTPIANSVTVRQDLERQLGELREEFNALSQEIAMSQLIDLALLPLDMFSMFSGIKSTIDAAKSMATNVMKKFKKSGLANSVSTLTDSLSDAASSISRGSSIRSIGSSASAWTDVSTQITDISSSVSSVSTQTSTISRRLRLKEMATQTEGMNFDDISAAVLKTKIDKSTQISPNTIPDIVTEASEKFIPNRAYRVINNDDVFEAGIDGKFFAYKVDTFEEIPFDVQKFADLVTDSPVISAIIDFKTLKNLNDNYGITKQQAFNLLRSDPRVLREFINQDNPIIRNRIEQLIMQCRL.

The spike head stretch occupies residues 65 to 224; that stretch reads LDGPYQPMTF…KCTEYINNGL (160 aa). An intrachain disulfide couples C203 to C216. Residues 248–479 are spike body and stalk (antigen domain); sequence AQANEDIVIS…LISLVPSNDD (232 aa). The short motif at 308–310 is the DGE motif; interaction with ITGA2/ITGB1 heterodimer element; it reads DGE. C318 and C380 are disulfide-bonded. A hydrophobic; possible role in virus entry into host cell region spans residues 389–409; sequence LPVGQWPVLTGGAVSLHSAGV. The YGL motif; interaction with ITGA4 signature appears at 448-450; it reads YGL. The stretch at 484–511 forms a coiled coil; that stretch reads IANSVTVRQDLERQLGELREEFNALSQE. The spike foot stretch occupies residues 510–776; sequence QEIAMSQLID…IEQLIMQCRL (267 aa). A KID motif; interaction with HSPA8 motif is present at residues 644 to 646; that stretch reads KID.

Belongs to the rotavirus VP4 family. Homotrimer. VP4 adopts a dimeric appearance above the capsid surface, while forming a trimeric base anchored inside the capsid layer. Only hints of the third molecule are observed above the capsid surface. It probably performs a series of molecular rearrangements during viral entry. Prior to trypsin cleavage, it is flexible. The priming trypsin cleavage triggers its rearrangement into rigid spikes with approximate two-fold symmetry of their protruding parts. After an unknown second triggering event, cleaved VP4 may undergo another rearrangement, in which two VP5* subunits fold back on themselves and join a third subunit to form a tightly associated trimer, shaped like a folded umbrella. Interacts with VP6. Interacts with VP7. As to quaternary structure, homotrimer. The trimer is coiled-coil stabilized by its C-terminus, however, its N-terminus, known as antigen domain or 'body', seems to be flexible allowing it to self-associate either as a dimer or a trimer. In terms of processing, proteolytic cleavage by trypsin results in activation of VP4 functions and greatly increases infectivity. The penetration into the host cell is dependent on trypsin treatment of VP4. It produces two peptides, VP5* and VP8* that remain associated with the virion. Cleavage of VP4 by trypsin probably occurs in vivo in the lumen of the intestine prior to infection of enterocytes. Trypsin seems to be incorporated into the three-layered viral particles but remains inactive as long as the viral outer capsid is intact and would only be activated upon the solubilization of the latter.

The protein resides in the virion. The protein localises to the host rough endoplasmic reticulum. It localises to the host cell membrane. It is found in the host cytoplasm. Its subcellular location is the host cytoskeleton. The protein resides in the host endoplasmic reticulum-Golgi intermediate compartment. Functionally, spike-forming protein that mediates virion attachment to the host epithelial cell receptors and plays a major role in cell penetration, determination of host range restriction and virulence. Rotavirus attachment and entry into the host cell probably involves multiple sequential contacts between the outer capsid proteins VP4 and VP7, and the cell receptors. It is subsequently lost, together with VP7, following virus entry into the host cell. Following entry into the host cell, low intracellular or intravesicular Ca(2+) concentration probably causes the calcium-stabilized VP7 trimers to dissociate from the virion. This step is probably necessary for the membrane-disrupting entry step and the release of VP4, which is locked onto the virion by VP7. During the virus exit from the host cell, VP4 seems to be required to target the newly formed virions to the host cell lipid rafts. In terms of biological role, forms the spike 'foot' and 'body' and acts as a membrane permeabilization protein that mediates release of viral particles from endosomal compartments into the cytoplasm. During entry, the part of VP5* that protrudes from the virus folds back on itself and reorganizes from a local dimer to a trimer. This reorganization may be linked to membrane penetration by exposing VP5* hydrophobic region. In integrin-dependent strains, VP5* targets the integrin heterodimer ITGA2/ITGB1 for cell attachment. Forms the head of the spikes and mediates the recognition of specific host cell surface glycans. It is the viral hemagglutinin and an important target of neutralizing antibodies. In sialic acid-dependent strains, VP8* binds to host cell sialic acid, most probably a ganglioside, providing the initial contact. In some other strains, VP8* mediates the attachment to histo-blood group antigens (HBGAs) for viral entry. This Macaca mulatta (Rhesus macaque) protein is Outer capsid protein VP4.